Consider the following 220-residue polypeptide: Pyridoxine/pyridoxamine 5'-phosphate oxidase (220 aa).

Substrate-binding positions include Arg-13–Tyr-16 and Lys-77. FMN-binding positions include Arg-72–Lys-77, Phe-87–Thr-88, Lys-94, and Gln-116. Substrate is bound by residues Tyr-134, Arg-138, and Ser-142. Residues Gln-151–Ser-152 and Trp-197 each bind FMN. Arg-203–His-205 provides a ligand contact to substrate. FMN is bound at residue Arg-207.

It belongs to the pyridoxamine 5'-phosphate oxidase family. As to quaternary structure, homodimer. It depends on FMN as a cofactor.

The catalysed reaction is pyridoxamine 5'-phosphate + O2 + H2O = pyridoxal 5'-phosphate + H2O2 + NH4(+). It carries out the reaction pyridoxine 5'-phosphate + O2 = pyridoxal 5'-phosphate + H2O2. The protein operates within cofactor metabolism; pyridoxal 5'-phosphate salvage; pyridoxal 5'-phosphate from pyridoxamine 5'-phosphate: step 1/1. It participates in cofactor metabolism; pyridoxal 5'-phosphate salvage; pyridoxal 5'-phosphate from pyridoxine 5'-phosphate: step 1/1. Catalyzes the oxidation of either pyridoxine 5'-phosphate (PNP) or pyridoxamine 5'-phosphate (PMP) into pyridoxal 5'-phosphate (PLP). This is Pyridoxine/pyridoxamine 5'-phosphate oxidase from Mycobacterium sp. (strain KMS).